The primary structure comprises 174 residues: Centrosomal protein 20 (174 aa).

The tract at residues 1–104 is necessary and sufficient for homooligomerization and localization to centrosomes and pericentriolar satellites; that stretch reads MATVTELKAV…AFEESKDNSI (104 aa). A LisH domain is found at 49 to 81; it reads ENLLINELIREYLEFNKYKYTASVLIAESGQPV. The disordered stretch occupies residues 136–174; the sequence is TKHLSWKPSRRPDDDHVRKDTGPRTTTEELPAAAQAVSR. Phosphoserine is present on S144. Over residues 145–157 the composition is skewed to basic and acidic residues; it reads RRPDDDHVRKDTG.

Belongs to the CEP43 family. In terms of assembly, homooligomer; probably required for localization to centrosomes. Forms a complex with KIAA0753/OFIP and OFD1; within this complex may stabilize the interaction between OFD1 and KIAA0753/OFIP. Interacts with PCM1; this interaction may be mediated by KIAA0753/OFIP.

It localises to the cytoplasm. The protein localises to the cytoskeleton. The protein resides in the microtubule organizing center. It is found in the centrosome. Its subcellular location is the centriole. It localises to the cell projection. The protein localises to the cilium. The protein resides in the cilium basal body. It is found in the cytoplasmic granule. Its subcellular location is the centriolar satellite. Its function is as follows. Involved in the biogenesis of cilia. Required for the recruitment of PLK1 to centrosomes and S phase progression. The protein is Centrosomal protein 20 of Mus musculus (Mouse).